The primary structure comprises 373 residues: CASP-like protein UU6 (373 aa).

2 disordered regions span residues 1–100 (MGTL…GSEG) and 172–195 (TKET…PKKK). The Cytoplasmic portion of the chain corresponds to 1–204 (MGTLTDPTVD…KHRLRKHLTA (204 aa)). A compositionally biased stretch (polar residues) spans 56-74 (KTNTGNAAESTASTENGET). Residues 205–225 (IGAYSFAFRFSETVLSLIAIV) traverse the membrane as a helical segment. The Extracellular portion of the chain corresponds to 226–253 (VMCSTRGSMRTDGVDFGTLKFNHFQAYR). Residues 254–274 (YLVAVNVIVFVYSTFQFIQLL) traverse the membrane as a helical segment. Over 275–276 (YT) the chain is Cytoplasmic. Residues 277–297 (VILGISFIPSIFISTWMTFGF) form a helical membrane-spanning segment. At 298–342 (DQLFLYLLLSASTSAATVANMSYTGEMGIQLCSRFDVGSFCSKAD) the chain is on the extracellular side. An N-linked (GlcNAc...) asparagine glycan is attached at N317. The helical transmembrane segment at 343–363 (VAVTMSFFAVLAMLSSTILAI) threads the bilayer. At 364–373 (YRIAVLLREY) the chain is on the cytoplasmic side.

It belongs to the Casparian strip membrane proteins (CASP) family. In terms of assembly, homodimer and heterodimers.

It localises to the cell membrane. The sequence is that of CASP-like protein UU6 from Physcomitrium patens (Spreading-leaved earth moss).